A 239-amino-acid chain; its full sequence is 7-cyano-7-deazaguanine synthase (239 aa).

8 to 18 (FSGGLDSTASL) contacts ATP. The Zn(2+) site is built by Cys-194, Cys-209, Cys-212, and Cys-215.

This sequence belongs to the QueC family.

The catalysed reaction is 7-carboxy-7-deazaguanine + NH4(+) + ATP = 7-cyano-7-deazaguanine + ADP + phosphate + H2O + H(+). The protein operates within purine metabolism; 7-cyano-7-deazaguanine biosynthesis. Catalyzes the ATP-dependent conversion of 7-carboxy-7-deazaguanine (CDG) to 7-cyano-7-deazaguanine (preQ(0)). This is 7-cyano-7-deazaguanine synthase from Pyrococcus abyssi (strain GE5 / Orsay).